Consider the following 168-residue polypeptide: G/U mismatch-specific DNA glycosylase (168 aa).

It belongs to the uracil-DNA glycosylase (UDG) superfamily. TDG/mug family. As to quaternary structure, binds DNA as a monomer.

Its subcellular location is the cytoplasm. The catalysed reaction is Specifically hydrolyzes mismatched double-stranded DNA and polynucleotides, releasing free uracil.. In terms of biological role, excises ethenocytosine and uracil, which can arise by alkylation or deamination of cytosine, respectively, from the corresponding mispairs with guanine in ds-DNA. It is capable of hydrolyzing the carbon-nitrogen bond between the sugar-phosphate backbone of the DNA and the mispaired base. The complementary strand guanine functions in substrate recognition. Required for DNA damage lesion repair in stationary-phase cells. This chain is G/U mismatch-specific DNA glycosylase, found in Shigella dysenteriae serotype 1 (strain Sd197).